We begin with the raw amino-acid sequence, 260 residues long: MFDIGVNLTSSQFVKDRDDVVTRALAAGVSGMLLTGTNLHESQQAQKLAQRYACCWSTAGVHPHDSSQWQSETEDAIVALARQPDVVAIGECGLDFNRNFSTPQEQERAFQAQLRIAAELQMPVFMHCRDAHARFLALLEPWLDKLPGAVLHCFTGTREEMQECIDRGLYIGITGWVCDERRGLELRELLPFIPAEKLLIETDAPYLLPRDLTPKPASRRNEPAHLAHILARVAHWRGEDPQWLAATTDANVKTLFGIAF.

A divalent metal cation contacts are provided by E91, H127, and H152.

Belongs to the metallo-dependent hydrolases superfamily. TatD-type hydrolase family. TatD subfamily. In terms of assembly, monomer. Mg(2+) serves as cofactor.

It is found in the cytoplasm. Functionally, 3'-5' exonuclease that prefers single-stranded DNA and RNA. May play a role in the H(2)O(2)-induced DNA damage repair. The sequence is that of 3'-5' ssDNA/RNA exonuclease TatD from Citrobacter koseri (strain ATCC BAA-895 / CDC 4225-83 / SGSC4696).